We begin with the raw amino-acid sequence, 354 residues long: Malate dehydrogenase 1, peroxisomal (354 aa).

The tract at residues 6 to 14 (RIARISAHL) is peroxisomal targeting signal PTS2. NAD(+) contacts are provided by residues 49-55 (GAAGGIG) and aspartate 75. Arginine 122 and arginine 128 together coordinate substrate. Residues asparagine 135 and 158-160 (ISN) contribute to the NAD(+) site. Positions 160 and 194 each coordinate substrate. The active-site Proton acceptor is the histidine 218. Methionine 269 lines the NAD(+) pocket.

The protein belongs to the LDH/MDH superfamily. MDH type 1 family. As to quaternary structure, homodimer. As to expression, expressed in rosette leaves at low levels.

Its subcellular location is the peroxisome. It carries out the reaction (S)-malate + NAD(+) = oxaloacetate + NADH + H(+). Catalyzes a reversible NAD-dependent dehydrogenase reaction involved in central metabolism and redox homeostasis between organelle compartments. Peroxisomal NAD-dependent malate dehydrogenase involved in fatty acid beta-oxidation. Reoxidizes NADH from the beta-oxidation and provides NAD for the conversion of fatty acyl-CoA to acetyl-CoA. Does not participate directly in the glyoxylate cycle. Required for maintenance of photosynthetic rates under photorespiratory conditions, and carbon flow during photorespiration. Supplies NADH reductant to the peroxisomal hydroxypyruvate reductase (HPR), which reduces hydroxypyruvate into glycerate in the photorespiratory cycle. The protein is Malate dehydrogenase 1, peroxisomal of Arabidopsis thaliana (Mouse-ear cress).